The primary structure comprises 509 residues: Anaerobic nitric oxide reductase transcription regulator NorR (509 aa).

D56 is modified (4-aspartylphosphate). In terms of domain architecture, Sigma-54 factor interaction spans 186-415 (MIGRSPAMDR…LEHAIHRAAV (230 aa)). ATP is bound by residues 214 to 221 (GETGVGKE) and 277 to 286 (ADKGTLFLDE). The segment at residues 484–503 (WAATARALEMDGGNLHRLAR) is a DNA-binding region (H-T-H motif).

Its pathway is nitrogen metabolism; nitric oxide reduction. Functionally, required for the expression of anaerobic nitric oxide (NO) reductase, acts as a transcriptional activator for at least the norVW operon. Activation also requires sigma-54. The protein is Anaerobic nitric oxide reductase transcription regulator NorR of Aeromonas salmonicida (strain A449).